Reading from the N-terminus, the 728-residue chain is MIQAMPSAPTVDFKDPAYYFNRELSWLAFNQRVLHEGLDDRTPLLERLKFLAIFCSNLDEFFMVRVAGLKQQVEANVTKLTADGRTPSQQLKEISKSLRPLVYQQNQVFEYVLKEKLADEGIFLNDYVDLSQEERQYLHQFYDDHIFPVLTPLAVDPSHPFPYISNLSLNLGVVVRDPDTDEELFARVKVPPTLPRFVALPEDVCQPDPNKPWLWTGVPLEQVIAHNLASLFPGMIIQECHLFRVTRNADIAVEEDEADDLLLAIEEELRKRRVGKSAVRLEINASTPKNIRDRLMTDLGLEEIDVYDIDGLLGLKDLFFFLSLPAPHLKDEPWASVIPPRLKHVYEFVDGDEDGRVQQEGIDIFTLIRQGDILVHHPYQSFTASVQQFITQAAYDPHVLTIKMTLYRTSGDSPIVNALIAAAENGKQVAVLVELKARFDEENNINWARKLEQYGVHVVYGLVGLKTHTKTVLVVRQEGPDIRRYVHIGTGNYNPKTAKLYTDLGLITCRPELGNDLTNLFNFLTGYSRQKDYQKLLVAPVNMRERMVAMIEREADHCLNGGTGRIVAKMNSLVDTQIIRALYAASQAGVQIDLIVRGICCLRPGVENVSENIRVISVIGRLLEHSRIFYFHNGGEEEIYIGSADWMSRNLTRRVEAVVPVEQPDLKQELQSILGILLADNRQAWELQPDGTYVQRRPASPEQSQSSQAIFTAQAIAETTEDPELRSV.

Asparagine 57 is an ATP binding site. The Mg(2+) site is built by arginine 408 and arginine 438. The active-site Phosphohistidine intermediate is histidine 468. Tyrosine 501, arginine 597, and histidine 625 together coordinate ATP. The segment at 694 to 728 (VQRRPASPEQSQSSQAIFTAQAIAETTEDPELRSV) is disordered. The segment covering 695 to 709 (QRRPASPEQSQSSQA) has biased composition (low complexity).

This sequence belongs to the polyphosphate kinase 1 (PPK1) family. It depends on Mg(2+) as a cofactor. Post-translationally, an intermediate of this reaction is the autophosphorylated ppk in which a phosphate is covalently linked to a histidine residue through a N-P bond.

The catalysed reaction is [phosphate](n) + ATP = [phosphate](n+1) + ADP. Functionally, catalyzes the reversible transfer of the terminal phosphate of ATP to form a long-chain polyphosphate (polyP). This Synechocystis sp. (strain ATCC 27184 / PCC 6803 / Kazusa) protein is Polyphosphate kinase.